The sequence spans 339 residues: 4-hydroxy-2-oxovalerate aldolase (339 aa).

One can recognise a Pyruvate carboxyltransferase domain in the interval 7-259; the sequence is VILHDMSLRD…QSGIDLYKIM (253 aa). 15 to 16 contacts substrate; sequence RD. Aspartate 16 contacts Mn(2+). Histidine 19 (proton acceptor) is an active-site residue. Substrate is bound by residues serine 169 and histidine 198. The Mn(2+) site is built by histidine 198 and histidine 200. Tyrosine 289 contributes to the substrate binding site.

This sequence belongs to the 4-hydroxy-2-oxovalerate aldolase family.

The enzyme catalyses (S)-4-hydroxy-2-oxopentanoate = acetaldehyde + pyruvate. The sequence is that of 4-hydroxy-2-oxovalerate aldolase from Marinomonas sp. (strain MWYL1).